A 27-amino-acid polypeptide reads, in one-letter code: Cupiennin-3b (27 aa).

A Glutamic acid 1-amide modification is found at E27.

In terms of tissue distribution, expressed by the venom gland.

The protein resides in the secreted. This Cupiennius salei (American wandering spider) protein is Cupiennin-3b.